Here is a 361-residue protein sequence, read N- to C-terminus: Putative F-box protein At3g25460 (361 aa).

The region spanning 1–45 (MMMPELPEDLLVEILCRVPATSLKRLRSTCKLWNHLYNDKRFKSK) is the F-box domain.

The protein is Putative F-box protein At3g25460 of Arabidopsis thaliana (Mouse-ear cress).